Consider the following 479-residue polypeptide: F-box/LRR-repeat protein 16 (479 aa).

The interval 1 to 62 (MSSPGIDGDP…PTLPPPSLAA (62 aa)) is disordered. The span at 47–60 (CQPPPPPTLPPPSL) shows a compositional bias: pro residues. The residue at position 92 (Arg-92) is an Omega-N-methylarginine. Residues 94-139 (PLATDEKILNGLFWYFSACEKCVLAQVCKAWRRVLYQPKFWAGLTP) enclose the F-box domain. 7 LRR repeats span residues 244 to 266 (ITSLSVSDCINVADDAIAAISQL), 267 to 290 (LPNLAELSLQAYHVTDTALAYFTA), 319 to 343 (LPNLTALSLSGCSKVTDDGVELVAE), 345 to 369 (LRKLRSLDLSWCPRITDMALEYVAC), 371 to 395 (LHRLEELVLDRCVRITDTGLSYLST), 396 to 420 (MSSLRSLYLRWCCQVQDFGLKHLLA), and 446 to 470 (LQELEELELTNCPGATPELFKYFSQ).

As to quaternary structure, interacts with SKP1 and CUL1.

Substrate-recognition component of the SCF (SKP1-CUL1-F-box protein)-type E3 ubiquitin ligase complex. The chain is F-box/LRR-repeat protein 16 (FBXL16) from Homo sapiens (Human).